The chain runs to 226 residues: Exosome complex component rrp46 (226 aa).

Residues 205-226 (NESDGHENEKNPKEDVEMDVVA) are disordered. Positions 207-219 (SDGHENEKNPKED) are enriched in basic and acidic residues.

The protein belongs to the RNase PH family. Component of the RNA exosome complex. Specifically part of the catalytically inactive RNA exosome core complex (Exo-9) which may associate with the catalytic subunits rrp6 and dis3 in cytoplasmic- and nuclear-specific RNA exosome complex forms. Exo-9 is formed by a hexameric base ring of RNase PH domain-containing subunits and a cap ring consisting of csl4, rrp4 and rrp40.

The protein localises to the cytoplasm. Its subcellular location is the nucleus. The protein resides in the nucleolus. Non-catalytic component of the RNA exosome complex which has 3'-&gt;5' exoribonuclease activity and participates in a multitude of cellular RNA processing and degradation events. In the nucleus, the RNA exosome complex is involved in proper maturation of stable RNA species such as rRNA, snRNA and snoRNA, in the elimination of RNA processing by-products and non-coding 'pervasive' transcripts, such as antisense RNA species and cryptic unstable transcripts (CUTs), and of mRNAs with processing defects, thereby limiting or excluding their export to the cytoplasm. In the cytoplasm, the RNA exosome complex is involved in general mRNA turnover and in RNA surveillance pathways, preventing translation of aberrant mRNAs. The catalytic inactive RNA exosome core complex of 9 subunits (Exo-9) is proposed to play a pivotal role in the binding and presentation of RNA for ribonucleolysis, and to serve as a scaffold for the association with catalytic subunits and accessory proteins or complexes. ski6 is part of the hexameric ring of RNase PH domain-containing subunits proposed to form a central channel which threads RNA substrates for degradation. The protein is Exosome complex component rrp46 (rrp46) of Schizosaccharomyces pombe (strain 972 / ATCC 24843) (Fission yeast).